The sequence spans 600 residues: DNA ligase (600 aa).

Aspartate 259 lines the ATP pocket. The active-site N6-AMP-lysine intermediate is lysine 261. Residues arginine 266, arginine 281, glutamate 311, phenylalanine 351, arginine 428, and lysine 434 each contribute to the ATP site.

It belongs to the ATP-dependent DNA ligase family. It depends on Mg(2+) as a cofactor.

The enzyme catalyses ATP + (deoxyribonucleotide)n-3'-hydroxyl + 5'-phospho-(deoxyribonucleotide)m = (deoxyribonucleotide)n+m + AMP + diphosphate.. DNA ligase that seals nicks in double-stranded DNA during DNA replication, DNA recombination and DNA repair. In Acidianus ambivalens (Desulfurolobus ambivalens), this protein is DNA ligase.